Consider the following 220-residue polypeptide: Guanylate kinase (220 aa).

The Guanylate kinase-like domain occupies glycine 16–arginine 195. Serine 23–threonine 30 is a binding site for ATP.

Belongs to the guanylate kinase family.

The protein localises to the cytoplasm. The catalysed reaction is GMP + ATP = GDP + ADP. Essential for recycling GMP and indirectly, cGMP. This chain is Guanylate kinase, found in Rhodopseudomonas palustris (strain HaA2).